Here is a 63-residue protein sequence, read N- to C-terminus: Large ribosomal subunit protein uL29 (63 aa).

It belongs to the universal ribosomal protein uL29 family.

This Proteus mirabilis (strain HI4320) protein is Large ribosomal subunit protein uL29.